The following is a 211-amino-acid chain: Phosphoglycerate mutase (211 aa).

Residues 14–21 (RHGESEWN) and 27–28 (TG) each bind substrate. His-15 acts as the Tele-phosphohistidine intermediate in catalysis. Thr-37 carries the phosphothreonine modification. Residue Ser-62 is modified to Phosphoserine. Substrate contacts are provided by residues Arg-66, 93–96 (ERYY), Lys-104, 120–121 (RR), and 164–165 (GN). Glu-93 functions as the Proton donor/acceptor in the catalytic mechanism. Tyr-96 carries the phosphotyrosine modification. The residue at position 166 (Ser-166) is a Phosphoserine.

The protein belongs to the phosphoglycerate mutase family. BPG-dependent PGAM subfamily. Monomer. The N-terminus is blocked.

It carries out the reaction (2R)-2-phosphoglycerate = (2R)-3-phosphoglycerate. Its pathway is carbohydrate degradation; glycolysis; pyruvate from D-glyceraldehyde 3-phosphate: step 3/5. This is Phosphoglycerate mutase (gpm1) from Schizosaccharomyces pombe (strain 972 / ATCC 24843) (Fission yeast).